A 288-amino-acid polypeptide reads, in one-letter code: 33 kDa chaperonin (288 aa).

Intrachain disulfides connect Cys235–Cys237 and Cys268–Cys271.

Belongs to the HSP33 family. Post-translationally, under oxidizing conditions two disulfide bonds are formed involving the reactive cysteines. Under reducing conditions zinc is bound to the reactive cysteines and the protein is inactive.

Its subcellular location is the cytoplasm. In terms of biological role, redox regulated molecular chaperone. Protects both thermally unfolding and oxidatively damaged proteins from irreversible aggregation. Plays an important role in the bacterial defense system toward oxidative stress. In Streptococcus thermophilus (strain CNRZ 1066), this protein is 33 kDa chaperonin.